Reading from the N-terminus, the 298-residue chain is ATP phosphoribosyltransferase (298 aa).

It belongs to the ATP phosphoribosyltransferase family. Long subfamily. It depends on Mg(2+) as a cofactor.

The protein localises to the cytoplasm. It carries out the reaction 1-(5-phospho-beta-D-ribosyl)-ATP + diphosphate = 5-phospho-alpha-D-ribose 1-diphosphate + ATP. It functions in the pathway amino-acid biosynthesis; L-histidine biosynthesis; L-histidine from 5-phospho-alpha-D-ribose 1-diphosphate: step 1/9. Feedback inhibited by histidine. Functionally, catalyzes the condensation of ATP and 5-phosphoribose 1-diphosphate to form N'-(5'-phosphoribosyl)-ATP (PR-ATP). Has a crucial role in the pathway because the rate of histidine biosynthesis seems to be controlled primarily by regulation of HisG enzymatic activity. This chain is ATP phosphoribosyltransferase, found in Vibrio vulnificus (strain CMCP6).